A 209-amino-acid polypeptide reads, in one-letter code: Uracil phosphoribosyltransferase (209 aa).

Residues Arg-79, Arg-104, and 131–139 (DPMLATGGS) each bind 5-phospho-alpha-D-ribose 1-diphosphate. Residues Ile-194 and 199–201 (GDA) each bind uracil. Position 200 (Asp-200) interacts with 5-phospho-alpha-D-ribose 1-diphosphate.

This sequence belongs to the UPRTase family. It depends on Mg(2+) as a cofactor.

It catalyses the reaction UMP + diphosphate = 5-phospho-alpha-D-ribose 1-diphosphate + uracil. The protein operates within pyrimidine metabolism; UMP biosynthesis via salvage pathway; UMP from uracil: step 1/1. Allosterically activated by GTP. Catalyzes the conversion of uracil and 5-phospho-alpha-D-ribose 1-diphosphate (PRPP) to UMP and diphosphate. This is Uracil phosphoribosyltransferase from Streptococcus thermophilus (strain CNRZ 1066).